The primary structure comprises 514 residues: Sugar transport protein 4 (514 aa).

The Cytoplasmic segment spans residues 1–22; it reads MAGGFVSQTPGVRNYNYKLTPK. A run of 12 helical transmembrane segments spans residues 23 to 43, 80 to 100, 117 to 137, 140 to 160, 172 to 192, 202 to 222, 283 to 303, 321 to 341, 348 to 368, 387 to 407, 426 to 446, and 451 to 471; these read VFVTCFIGAFGGLIFGYDLGI, LLTLFTSSLYVAALVSSLFAS, FTFFIGSAFNGFAQNIAMLLI, ILLGFGVGFANQSVPVYLSEM, GFQVAIIFGIVVATIINYFTA, ISLGLACVPAVMIMIGALILP, LIMTCFIPFFQQLTGINVITF, LSAMVTGIIELLCTFVSVFTV, ILFLQGGIQMLVSQIAIGAMI, LIVALICIYVAGFAWSWGPLG, INVSVNMFFTFLVAQLFLTML, and FGLFFFFAFFVVIMTIFIYLM. Residues 472–514 lie on the Cytoplasmic side of the membrane; sequence LPETKNVPIEEMNRVWKAHWFWGKFIPDEAVNMGAAEMQQKSV.

Belongs to the major facilitator superfamily. Sugar transporter (TC 2.A.1.1) family. Mostly in flowers and roots, especially in anthers, including pollen, and root tips. Also present in some hydathodes.

The protein resides in the cell membrane. Functionally, mediates an active uptake of hexoses, probably by sugar/hydrogen symport. Can transport glucose, methylglucose, galactose, xylose and mannose, but not fructose. This is Sugar transport protein 4 (STP4) from Arabidopsis thaliana (Mouse-ear cress).